The primary structure comprises 405 residues: Phosphopentomutase (405 aa).

6 residues coordinate Mn(2+): Asp10, Asp303, His308, Asp344, His345, and His356.

This sequence belongs to the phosphopentomutase family. Requires Mn(2+) as cofactor.

It localises to the cytoplasm. The catalysed reaction is 2-deoxy-alpha-D-ribose 1-phosphate = 2-deoxy-D-ribose 5-phosphate. It catalyses the reaction alpha-D-ribose 1-phosphate = D-ribose 5-phosphate. It functions in the pathway carbohydrate degradation; 2-deoxy-D-ribose 1-phosphate degradation; D-glyceraldehyde 3-phosphate and acetaldehyde from 2-deoxy-alpha-D-ribose 1-phosphate: step 1/2. Functionally, isomerase that catalyzes the conversion of deoxy-ribose 1-phosphate (dRib-1-P) and ribose 1-phosphate (Rib-1-P) to deoxy-ribose 5-phosphate (dRib-5-P) and ribose 5-phosphate (Rib-5-P), respectively. In Shewanella loihica (strain ATCC BAA-1088 / PV-4), this protein is Phosphopentomutase.